Consider the following 175-residue polypeptide: Putative lipoprotein LppN (175 aa).

A signal peptide spans 1–20; the sequence is MRLPGRHVLYALSAVTMLAA. Cysteine 21 carries N-palmitoyl cysteine lipidation. Cysteine 21 carries S-diacylglycerol cysteine lipidation. The segment at 31 to 56 is disordered; that stretch reads ASTNMNPTNPPATAETATVSPTPAPQ. Over residues 33 to 48 the composition is skewed to low complexity; that stretch reads TNMNPTNPPATAETAT.

Its subcellular location is the cell membrane. This chain is Putative lipoprotein LppN (lppN), found in Mycobacterium bovis (strain ATCC BAA-935 / AF2122/97).